The sequence spans 292 residues: uncharacterized protein (292 aa).

The chain crosses the membrane as a helical span at residues 66 to 86; sequence LFFYLLFWWTYLTIVVLLTVP.

Its subcellular location is the host membrane. This is an uncharacterized protein from Alcelaphine herpesvirus 1 (strain C500) (AlHV-1).